The sequence spans 156 residues: 6,7-dimethyl-8-ribityllumazine synthase (156 aa).

Residues F22, 57 to 59, and 81 to 83 contribute to the 5-amino-6-(D-ribitylamino)uracil site; these read AYE and TVI. 86–87 contacts (2S)-2-hydroxy-3-oxobutyl phosphate; the sequence is GT. The active-site Proton donor is the H89. Residue F114 participates in 5-amino-6-(D-ribitylamino)uracil binding. A (2S)-2-hydroxy-3-oxobutyl phosphate-binding site is contributed by R128.

The protein belongs to the DMRL synthase family. Forms an icosahedral capsid composed of 60 subunits, arranged as a dodecamer of pentamers.

The enzyme catalyses (2S)-2-hydroxy-3-oxobutyl phosphate + 5-amino-6-(D-ribitylamino)uracil = 6,7-dimethyl-8-(1-D-ribityl)lumazine + phosphate + 2 H2O + H(+). It functions in the pathway cofactor biosynthesis; riboflavin biosynthesis; riboflavin from 2-hydroxy-3-oxobutyl phosphate and 5-amino-6-(D-ribitylamino)uracil: step 1/2. Catalyzes the formation of 6,7-dimethyl-8-ribityllumazine by condensation of 5-amino-6-(D-ribitylamino)uracil with 3,4-dihydroxy-2-butanone 4-phosphate. This is the penultimate step in the biosynthesis of riboflavin. The protein is 6,7-dimethyl-8-ribityllumazine synthase of Yersinia enterocolitica serotype O:8 / biotype 1B (strain NCTC 13174 / 8081).